A 137-amino-acid polypeptide reads, in one-letter code: Small ribosomal subunit protein uS12 (137 aa).

Disordered regions lie at residues 1 to 21 and 33 to 57; these read MPTI…KSKS and KVQT…TPRK. D102 is subject to 3-methylthioaspartic acid.

The protein belongs to the universal ribosomal protein uS12 family. In terms of assembly, part of the 30S ribosomal subunit. Contacts proteins S8 and S17. May interact with IF1 in the 30S initiation complex.

In terms of biological role, with S4 and S5 plays an important role in translational accuracy. Its function is as follows. Interacts with and stabilizes bases of the 16S rRNA that are involved in tRNA selection in the A site and with the mRNA backbone. Located at the interface of the 30S and 50S subunits, it traverses the body of the 30S subunit contacting proteins on the other side and probably holding the rRNA structure together. The combined cluster of proteins S8, S12 and S17 appears to hold together the shoulder and platform of the 30S subunit. The protein is Small ribosomal subunit protein uS12 of Streptococcus pneumoniae (strain ATCC 700669 / Spain 23F-1).